Here is a 323-residue protein sequence, read N- to C-terminus: tRNA U34 carboxymethyltransferase (323 aa).

Carboxy-S-adenosyl-L-methionine-binding positions include Lys-91, Trp-105, Lys-110, Gly-130, 152 to 154, 181 to 182, Met-196, Tyr-200, and Arg-315; these read DPS and IE.

Belongs to the class I-like SAM-binding methyltransferase superfamily. CmoB family. As to quaternary structure, homotetramer.

It carries out the reaction carboxy-S-adenosyl-L-methionine + 5-hydroxyuridine(34) in tRNA = 5-carboxymethoxyuridine(34) in tRNA + S-adenosyl-L-homocysteine + H(+). Functionally, catalyzes carboxymethyl transfer from carboxy-S-adenosyl-L-methionine (Cx-SAM) to 5-hydroxyuridine (ho5U) to form 5-carboxymethoxyuridine (cmo5U) at position 34 in tRNAs. This chain is tRNA U34 carboxymethyltransferase, found in Vibrio atlanticus (strain LGP32) (Vibrio splendidus (strain Mel32)).